Here is a 468-residue protein sequence, read N- to C-terminus: Soluble pyridine nucleotide transhydrogenase (468 aa).

38 to 47 serves as a coordination point for FAD; that stretch reads ERHYNVGGGC.

The protein belongs to the class-I pyridine nucleotide-disulfide oxidoreductase family. It depends on FAD as a cofactor.

The protein resides in the cytoplasm. The enzyme catalyses NAD(+) + NADPH = NADH + NADP(+). Functionally, conversion of NADPH, generated by peripheral catabolic pathways, to NADH, which can enter the respiratory chain for energy generation. The chain is Soluble pyridine nucleotide transhydrogenase from Pectobacterium atrosepticum (strain SCRI 1043 / ATCC BAA-672) (Erwinia carotovora subsp. atroseptica).